The chain runs to 170 residues: Adenine phosphoribosyltransferase (170 aa).

The protein belongs to the purine/pyrimidine phosphoribosyltransferase family. As to quaternary structure, homodimer.

The protein localises to the cytoplasm. The catalysed reaction is AMP + diphosphate = 5-phospho-alpha-D-ribose 1-diphosphate + adenine. Its pathway is purine metabolism; AMP biosynthesis via salvage pathway; AMP from adenine: step 1/1. Catalyzes a salvage reaction resulting in the formation of AMP, that is energically less costly than de novo synthesis. The chain is Adenine phosphoribosyltransferase from Brachyspira hyodysenteriae (strain ATCC 49526 / WA1).